The chain runs to 278 residues: MPFITVGQENSTSIDLYYEDHGTGQPVVLIHGFPLSGHSWERQSAALLDAGYRVITYDRRGFGQSSQPTTGYDYDTFAADLNTVLETLDLQDAVLVGFSMGTGEVARYVSSYGTARIAKVAFLASLEPFLLKTDDNPDGAAPQEFFDGIVAAVKADRYAFYTGFFNDFYNLDENLGTRISEEAVRNSWNTAASGGFFAAAAAPTTWYTDFRADIPRIDVPALILHGTGDRTLPIENTARVFHKALPSAEYVEVEGAPHGLLWTHAEEVNTALLAFLAK.

One can recognise an AB hydrolase-1 domain in the interval 26–264; that stretch reads PVVLIHGFPL…GAPHGLLWTH (239 aa). Residues Ser99, Asp229, and His258 contribute to the active site.

It belongs to the AB hydrolase superfamily. Bacterial non-heme haloperoxidase / perhydrolase family. Homotrimer.

Functionally, may be a chlorinating enzyme involved in 7-chlorotetracycline biosynthesis. The protein is Non-haem bromoperoxidase BPO-A2 (bpoA2) of Kitasatospora aureofaciens (Streptomyces aureofaciens).